We begin with the raw amino-acid sequence, 258 residues long: Neurotrophin-3 (258 aa).

Positions 1–18 (MSILFYVIFLAYLRGIQG) are cleaved as a signal peptide. The propeptide occupies 19–139 (NSMDQRSLPE…ANRTSPRRKR (121 aa)). Positions 60-85 (QSTLPKAEAPREPEQGEATRSEFQPM) are disordered. Positions 67–79 (EAPREPEQGEATR) are enriched in basic and acidic residues. Asparagine 131 carries an N-linked (GlcNAc...) asparagine glycan. Disulfide bonds link cysteine 153–cysteine 218, cysteine 196–cysteine 247, and cysteine 206–cysteine 249.

This sequence belongs to the NGF-beta family. As to expression, brain and peripheral tissues.

It is found in the secreted. In terms of biological role, seems to promote the survival of visceral and proprioceptive sensory neurons. The polypeptide is Neurotrophin-3 (Ntf3) (Mus musculus (Mouse)).